The chain runs to 1265 residues: Stromal processing peptidase, chloroplastic (1265 aa).

Residues 1-143 (MASSSSSIFT…SLRKHSQIVN (143 aa)) constitute a chloroplast transit peptide. His240 serves as a coordination point for Zn(2+). Glu243 (proton acceptor) is an active-site residue. Zn(2+) is bound at residue His244. Glu314 is an active-site residue. Glu321 is a Zn(2+) binding site.

It belongs to the peptidase M16 family. Requires Zn(2+) as cofactor.

The protein resides in the plastid. The protein localises to the chloroplast stroma. Functionally, cleaves presequences (transit peptides) from chloroplastic protein precursors. Initially recognizes a precursor by binding to the C-terminus of its transit peptide and then removes the transit peptide in a single endoproteolytic step. In a next step, pursues the cleavage of transit peptide to a subfragment form. This chain is Stromal processing peptidase, chloroplastic, found in Arabidopsis thaliana (Mouse-ear cress).